The chain runs to 267 residues: Matrilysin (267 aa).

A signal peptide spans 1-17 (MRLTVLCAVCLLPGSLA). Residues 18–94 (LPLPQEAGGM…PRCGVPDVAE (77 aa)) constitute a propeptide, activation peptide. Positions 85 to 92 (PRCGVPDV) match the Cysteine switch motif. Cys-87 contributes to the Zn(2+) binding site. Asp-153 provides a ligand contact to Ca(2+). Zn(2+)-binding residues include His-163 and Asp-165. The Ca(2+) site is built by Asp-170, Gly-171, Gly-173, and Thr-175. A Zn(2+)-binding site is contributed by His-178. Ca(2+) contacts are provided by Gly-185, Gly-187, and Asp-189. His-191 contacts Zn(2+). Ca(2+) contacts are provided by Asp-193 and Glu-196. His-214 provides a ligand contact to Zn(2+). Glu-215 is a catalytic residue. His-218 and His-224 together coordinate Zn(2+).

The protein belongs to the peptidase M10A family. Ca(2+) is required as a cofactor. It depends on Zn(2+) as a cofactor.

It is found in the secreted. The protein resides in the extracellular space. The protein localises to the extracellular matrix. The enzyme catalyses Cleavage of 14-Ala-|-Leu-15 and 16-Tyr-|-Leu-17 in B chain of insulin. No action on collagen types I, II, IV, V. Cleaves gelatin chain alpha2(I) &gt; alpha1(I).. Its function is as follows. Degrades casein, gelatins of types I, III, IV, and V, and fibronectin. Activates procollagenase. The protein is Matrilysin (MMP7) of Homo sapiens (Human).